Consider the following 177-residue polypeptide: ATP synthase subunit b, chloroplastic (177 aa).

The chain crosses the membrane as a helical span at residues 22-42 (ILETNIINLAAVVGIVVFFVG).

It belongs to the ATPase B chain family. F-type ATPases have 2 components, F(1) - the catalytic core - and F(0) - the membrane proton channel. F(1) has five subunits: alpha(3), beta(3), gamma(1), delta(1), epsilon(1). F(0) has four main subunits: a(1), b(1), b'(1) and c(10-14). The alpha and beta chains form an alternating ring which encloses part of the gamma chain. F(1) is attached to F(0) by a central stalk formed by the gamma and epsilon chains, while a peripheral stalk is formed by the delta, b and b' chains.

The protein localises to the plastid. It is found in the chloroplast thylakoid membrane. F(1)F(0) ATP synthase produces ATP from ADP in the presence of a proton or sodium gradient. F-type ATPases consist of two structural domains, F(1) containing the extramembraneous catalytic core and F(0) containing the membrane proton channel, linked together by a central stalk and a peripheral stalk. During catalysis, ATP synthesis in the catalytic domain of F(1) is coupled via a rotary mechanism of the central stalk subunits to proton translocation. In terms of biological role, component of the F(0) channel, it forms part of the peripheral stalk, linking F(1) to F(0). This is ATP synthase subunit b, chloroplastic from Oedogonium cardiacum (Filamentous green alga).